We begin with the raw amino-acid sequence, 898 residues long: Endoplasmic reticulum metallopeptidase 1 (898 aa).

Methionine 1 bears the N-acetylmethionine mark. The disordered stretch occupies residues 1-55; sequence MEWSSESAAVRRHRGTAERREGEAAASHRQREASAQEDAKGVGRMWGKTENGGGS. Over 1–66 the chain is Cytoplasmic; that stretch reads MEWSSESAAV…VAKTALSEAR (66 aa). Residues 29–41 show a composition bias toward basic and acidic residues; the sequence is RQREASAQEDAKG. Residues 67 to 87 form a helical membrane-spanning segment; the sequence is TALALALYLLALRALVQLSLQ. Over 88–393 the chain is Lumenal; it reads RLVLSRTSGL…SSSEYRHGSM (306 aa). Asparagine 176 carries an N-linked (GlcNAc...) asparagine glycan. A disulfide bond links cysteine 198 and cysteine 216. Residues histidine 199 and aspartate 211 each contribute to the Zn(2+) site. Residue glutamate 245 is the Proton acceptor of the active site. Zn(2+) contacts are provided by glutamate 246, glutamate 272, and histidine 348. The helical transmembrane segment at 394 to 414 threads the bilayer; that stretch reads VFFDVLGLLVIAYPSRVGSII. At 415–451 the chain is on the cytoplasmic side; it reads NYMVVMAVVLYLGKKLLRPKHRNANYMRDFLCGLGIT. A helical transmembrane segment spans residues 452–472; sequence FISWFTSLVTVLIIAVFISLI. Residues 473–480 lie on the Lumenal side of the membrane; the sequence is GQSLSWYN. The chain crosses the membrane as a helical span at residues 481 to 501; that stretch reads YFYIAVCLYGTATVAKIIFIH. Topologically, residues 502 to 515 are cytoplasmic; the sequence is TLAKRFYYMNASDL. Residues 516-538 form a helical membrane-spanning segment; sequence YLGELFFDTSLFVHCAFLVALTY. Topologically, residues 539-542 are lumenal; it reads QGFC. The chain crosses the membrane as a helical span at residues 543-562; the sequence is SAFMSAVWVVFPLLTKLCVY. Over 563–573 the chain is Cytoplasmic; that stretch reads KDFKKHGAQGR. A helical membrane pass occupies residues 574 to 594; sequence FVALYLLGMFIPYLYGLYLIW. Residues 595-615 are Lumenal-facing; sequence AVFEMFTPILGRSGSEIPPDV. Residues 616-636 form a helical membrane-spanning segment; sequence VLASILAVCVMILSSYFITFI. Residues 637-645 lie on the Cytoplasmic side of the membrane; that stretch reads YLVNSTKKT. A helical transmembrane segment spans residues 646 to 666; that stretch reads ILTLILVCAVTFLLVCSGAFF. Over 667-898 the chain is Lumenal; it reads PYSSNPESPK…WVSTYSLFVF (232 aa). N-linked (GlcNAc...) asparagine glycosylation occurs at asparagine 724.

Belongs to the peptidase M28 family. Zn(2+) is required as a cofactor.

The protein localises to the endoplasmic reticulum membrane. In terms of biological role, within the ovary, required for the organization of somatic cells and oocytes into discrete follicular structures. The protein is Endoplasmic reticulum metallopeptidase 1 of Mus musculus (Mouse).